A 126-amino-acid chain; its full sequence is Histone H2B type 1-H (126 aa).

The segment covering 1–12 (MPEPAKSAPAPK) has biased composition (low complexity). Residues 1–36 (MPEPAKSAPAPKKGSKKALTKAQKKDGKKRKRSRKE) are disordered. P2 is subject to N-acetylproline. E3 is subject to ADP-ribosyl glutamic acid. K6 is subject to N6-(2-hydroxyisobutyryl)lysine; alternate. K6 carries the post-translational modification N6-(beta-hydroxybutyryl)lysine; alternate. K6 is subject to N6-acetyllysine; alternate. K6 carries the post-translational modification N6-butyryllysine; alternate. K6 bears the N6-crotonyllysine; alternate mark. K6 carries the post-translational modification N6-lactoyllysine; alternate. A Glycyl lysine isopeptide (Lys-Gly) (interchain with G-Cter in SUMO2); alternate cross-link involves residue K6. S7 bears the ADP-ribosylserine mark. K12 is subject to N6-(beta-hydroxybutyryl)lysine; alternate. K12 and K13 each carry N6-acetyllysine; alternate. K12 and K13 each carry N6-crotonyllysine; alternate. An N6-lactoyllysine; alternate modification is found at K12. At K13 the chain carries N6-(2-hydroxyisobutyryl)lysine; alternate. The residue at position 15 (S15) is a Phosphoserine; by STK4/MST1. N6-acetyllysine; alternate is present on residues K16, K17, K21, and K24. Residues K16, K17, K21, and K24 each carry the N6-crotonyllysine; alternate modification. K16, K17, K21, and K24 each carry N6-lactoyllysine; alternate. At K17 the chain carries N6-glutaryllysine; alternate. N6-(2-hydroxyisobutyryl)lysine; alternate is present on residues K21 and K24. K21 bears the N6-(beta-hydroxybutyryl)lysine; alternate mark. K21 carries the N6-butyryllysine; alternate modification. A Glycyl lysine isopeptide (Lys-Gly) (interchain with G-Cter in SUMO2); alternate cross-link involves residue K21. K25 is modified (N6-(2-hydroxyisobutyryl)lysine). An N6-(2-hydroxyisobutyryl)lysine; alternate modification is found at K35. K35 carries the post-translational modification N6-(beta-hydroxybutyryl)lysine; alternate. K35 carries the post-translational modification N6-crotonyllysine; alternate. At K35 the chain carries N6-glutaryllysine; alternate. Residue K35 is modified to N6-succinyllysine; alternate. A Glycyl lysine isopeptide (Lys-Gly) (interchain with G-Cter in ubiquitin); alternate cross-link involves residue K35. E36 is modified (polyADP-ribosyl glutamic acid). S37 is subject to Phosphoserine; by AMPK. N6-(2-hydroxyisobutyryl)lysine; alternate occurs at positions 44, 47, and 58. K44 is modified (N6-lactoyllysine; alternate). N6-glutaryllysine; alternate occurs at positions 44 and 47. K47 carries the post-translational modification N6-methyllysine; alternate. K58 is modified (N6,N6-dimethyllysine; alternate). R80 bears the Dimethylated arginine mark. N6-(2-hydroxyisobutyryl)lysine; alternate is present on K86. The residue at position 86 (K86) is an N6-acetyllysine; alternate. At K86 the chain carries N6-lactoyllysine; alternate. K86 carries the N6,N6,N6-trimethyllysine; alternate modification. R87 and R93 each carry omega-N-methylarginine. K109 is modified (N6-(2-hydroxyisobutyryl)lysine; alternate). K109 carries the post-translational modification N6-(beta-hydroxybutyryl)lysine; alternate. K109 is modified (N6-lactoyllysine; alternate). N6-glutaryllysine; alternate is present on K109. K109 bears the N6-methyllysine; alternate mark. Residue S113 is glycosylated (O-linked (GlcNAc) serine). Residue T116 is modified to Phosphothreonine. An N6-(2-hydroxyisobutyryl)lysine; alternate mark is found at K117 and K121. Position 117 is an N6-(beta-hydroxybutyryl)lysine; alternate (K117). Residues K117 and K121 each carry the N6-lactoyllysine; alternate modification. K117 and K121 each carry N6-glutaryllysine; alternate. Residues K117 and K121 each carry the N6-succinyllysine; alternate modification. K117 is modified (N6-methylated lysine; alternate). K121 participates in a covalent cross-link: Glycyl lysine isopeptide (Lys-Gly) (interchain with G-Cter in ubiquitin); alternate.

The protein belongs to the histone H2B family. In terms of assembly, the nucleosome is a histone octamer containing two molecules each of H2A, H2B, H3 and H4 assembled in one H3-H4 heterotetramer and two H2A-H2B heterodimers. The octamer wraps approximately 147 bp of DNA. Monoubiquitination at Lys-35 (H2BK34Ub) by the MSL1/MSL2 dimer is required for histone H3 'Lys-4' (H3K4me) and 'Lys-79' (H3K79me) methylation and transcription activation at specific gene loci, such as HOXA9 and MEIS1 loci. Similarly, monoubiquitination at Lys-121 (H2BK120Ub) by the RNF20/40 complex gives a specific tag for epigenetic transcriptional activation and is also prerequisite for histone H3 'Lys-4' and 'Lys-79' methylation. It also functions cooperatively with the FACT dimer to stimulate elongation by RNA polymerase II. H2BK120Ub also acts as a regulator of mRNA splicing: deubiquitination by USP49 is required for efficient cotranscriptional splicing of a large set of exons. In terms of processing, phosphorylated on Ser-15 (H2BS14ph) by STK4/MST1 during apoptosis; which facilitates apoptotic chromatin condensation. Also phosphorylated on Ser-15 in response to DNA double strand breaks (DSBs), and in correlation with somatic hypermutation and immunoglobulin class-switch recombination. Phosphorylation at Ser-37 (H2BS36ph) by AMPK in response to stress promotes transcription. Post-translationally, glcNAcylation at Ser-113 promotes monoubiquitination of Lys-121. It fluctuates in response to extracellular glucose, and associates with transcribed genes. ADP-ribosylated by PARP1 or PARP2 on Ser-7 (H2BS6ADPr) in response to DNA damage. H2BS6ADPr promotes recruitment of CHD1L. Mono-ADP-ribosylated on Glu-3 (H2BE2ADPr) by PARP3 in response to single-strand breaks. Poly ADP-ribosylation on Glu-36 (H2BE35ADPr) by PARP1 regulates adipogenesis: it inhibits phosphorylation at Ser-37 (H2BS36ph), thereby blocking expression of pro-adipogenetic genes. In terms of processing, crotonylation (Kcr) is specifically present in male germ cells and marks testis-specific genes in post-meiotic cells, including X-linked genes that escape sex chromosome inactivation in haploid cells. Crotonylation marks active promoters and enhancers and confers resistance to transcriptional repressors. It is also associated with post-meiotically activated genes on autosomes. Post-translationally, hydroxybutyrylation of histones is induced by starvation. Lactylated in macrophages by EP300/P300 by using lactoyl-CoA directly derived from endogenous or exogenous lactate, leading to stimulates gene transcription.

It is found in the nucleus. The protein resides in the chromosome. Its function is as follows. Core component of nucleosome. Nucleosomes wrap and compact DNA into chromatin, limiting DNA accessibility to the cellular machineries which require DNA as a template. Histones thereby play a central role in transcription regulation, DNA repair, DNA replication and chromosomal stability. DNA accessibility is regulated via a complex set of post-translational modifications of histones, also called histone code, and nucleosome remodeling. The protein is Histone H2B type 1-H of Mus musculus (Mouse).